The sequence spans 189 residues: Threonylcarbamoyl-AMP synthase (189 aa).

Residues 6-189 form the YrdC-like domain; it reads SPAFESVLTA…ALTGELYRQG (184 aa).

This sequence belongs to the SUA5 family. TsaC subfamily.

It localises to the cytoplasm. It carries out the reaction L-threonine + hydrogencarbonate + ATP = L-threonylcarbamoyladenylate + diphosphate + H2O. Its function is as follows. Required for the formation of a threonylcarbamoyl group on adenosine at position 37 (t(6)A37) in tRNAs that read codons beginning with adenine. Catalyzes the conversion of L-threonine, HCO(3)(-)/CO(2) and ATP to give threonylcarbamoyl-AMP (TC-AMP) as the acyladenylate intermediate, with the release of diphosphate. This is Threonylcarbamoyl-AMP synthase from Photorhabdus laumondii subsp. laumondii (strain DSM 15139 / CIP 105565 / TT01) (Photorhabdus luminescens subsp. laumondii).